The primary structure comprises 1331 residues: NPC1-like intracellular cholesterol transporter 1 (1331 aa).

Positions 1–20 (MAAAWLGWLLWALLLSAAQG) are cleaved as a signal peptide. Topologically, residues 21 to 282 (ELYTPKHEAG…RPSFYMGRMP (262 aa)) are extracellular. Disulfide bonds link Cys-32-Cys-90, Cys-38-Cys-56, Cys-77-Cys-125, Cys-91-Cys-129, Cys-113-Cys-254, Cys-116-Cys-172, Cys-189-Cys-197, Cys-243-Cys-259, and Cys-256-Cys-263. Residues Asn-53 and Asn-85 are each glycosylated (N-linked (GlcNAc...) asparagine). A glycan (N-linked (GlcNAc...) asparagine) is linked at Asn-138. An N-linked (GlcNAc...) asparagine glycan is attached at Asn-244. Residues 283-303 (GWLALIIIFTAVFVLLSAVLV) traverse the membrane as a helical segment. The Cytoplasmic portion of the chain corresponds to 304–352 (RLRVVSNRNKNKAEGPQEAPKLPHKHKLSPHTILGRFFQNWGTRVASWP). Residues 353 to 373 (LTVLALSFIVVIALAAGLTFI) traverse the membrane as a helical segment. At 374–632 (ELTTDPVELW…DEINRTTIQD (259 aa)) the chain is on the extracellular side. Asn-416, Asn-431, Asn-464, Asn-479, Asn-497, and Asn-506 each carry an N-linked (GlcNAc...) asparagine glycan. The cysteines at positions 471 and 485 are disulfide-linked. A disulfide bridge links Cys-525 with Cys-542. Residues Asn-606 and Asn-626 are each glycosylated (N-linked (GlcNAc...) asparagine). An SSD domain is found at 632 to 797 (DLPVFAVSYI…MTAFVALLSL (166 aa)). A helical membrane pass occupies residues 633–653 (LPVFAVSYIIVFLYISLALGS). The Cytoplasmic portion of the chain corresponds to 654 to 665 (YSRCSRVAVESK). Residues 666 to 686 (ATLGLGGVIVVLGAVLAAMGF) traverse the membrane as a helical segment. The Extracellular segment spans residues 687 to 696 (YSYLGVPSSL). The chain crosses the membrane as a helical span at residues 697–717 (VIIQVVPFLVLAVGADNIFIF). The Cytoplasmic segment spans residues 718 to 742 (VLEYQRLPRMPGEQREAHIGRTLGS). Residues 743–763 (VAPSMLLCSLSEAICFFLGAL) form a helical membrane-spanning segment. The Extracellular portion of the chain corresponds to 764 to 776 (TPMPAVRTFALTS). Residues 777-797 (GLAIILDFLLQMTAFVALLSL) traverse the membrane as a helical segment. The Cytoplasmic segment spans residues 798–846 (DSKRQEASRPDVLCCFSTRKLPPPKEKEGLLLRFFRKIYAPFLLHRFIR). A helical membrane pass occupies residues 847 to 867 (PVVMLLFLTLFGANLYLMCNI). Over 868 to 1113 (NVGLDQELAL…QQYLTVLPEG (246 aa)) the chain is Extracellular. N-linked (GlcNAc...) asparagine glycans are attached at residues Asn-909 and Asn-917. Disulfide bonds link Cys-920/Cys-925, Cys-967/Cys-1025, and Cys-981/Cys-990. 3 N-linked (GlcNAc...) asparagine glycosylation sites follow: Asn-996, Asn-1038, and Asn-1076. The chain crosses the membrane as a helical span at residues 1114 to 1134 (IFTLALCFVPTFVVCYLLLGL). At 1135-1142 (DMCSGILN) the chain is on the cytoplasmic side. Residues 1143-1163 (LLSIIMILVDTIGLMAVWGIS) form a helical membrane-spanning segment. The Extracellular portion of the chain corresponds to 1164 to 1165 (YN). The chain crosses the membrane as a helical span at residues 1166–1186 (AVSLINLVTAVGMSVEFVSHI). At 1187–1206 (TRSFAVSTKPTRLERAKDAT) the chain is on the cytoplasmic side. A helical membrane pass occupies residues 1207-1227 (VFMGSAVFAGVAMTNFPGILI). The Extracellular portion of the chain corresponds to 1228–1242 (LGFAQAQLIQIFFFR). Residues 1243-1263 (LNLLITLLGLLHGLVFLPVVL) form a helical membrane-spanning segment. Over 1264 to 1331 (SYLGPDVNQA…SSLPKSDQKF (68 aa)) the chain is Cytoplasmic.

The protein belongs to the patched family. As to quaternary structure, interacts with RAB11A, MYO5B and RAB11FIP2. Interaction with RAB11A, MYO5B and RAB11FIP2 is required for proper transport to the plasma membrane upon cholesterol depletion. Interacts with NPC2. Interacts with LIMA1. In terms of processing, highly glycosylated. In terms of tissue distribution, small intestine showed the highest level of expression. Expression in other tissues including gall bladder, liver, testis and stomach is also observed. Along the duodenum-ileum axis, the levels vary in different segments of the intestine with peak expression in the proximal jejunum. Protein expression is confined to the enterocyte. Discrete localization to the epithelial layer bordering the luminal space along the crypt-villus axis. Protein expression in the enterocyte is observed closest to the luminal space. Expression in enterocytes from the proximal (jejunum) but not in the distal (ileum) region.

Its subcellular location is the apical cell membrane. The protein localises to the cell membrane. It catalyses the reaction cholesterol(in) = cholesterol(out). It carries out the reaction sitosterol(out) = sitosterol(in). In terms of biological role, plays a major role in cholesterol homeostasis. Critical for the uptake of cholesterol across the plasma membrane of the intestinal enterocyte. Involved in plant sterol absorption, it transports sitosterol, although at lower rates than cholesterol. Is the direct molecular target of ezetimibe, a drug that inhibits cholesterol absorption and is approved for the treatment of hypercholesterolemia. May have a function in the transport of multiple lipids and their homeostasis, thereby influencing lipid metabolism regulation. May be involved in caveolin trafficking from the plasma membrane. Acts as a negative regulator of NPC2 and down-regulates its expression and secretion by inhibiting its maturation and accelerating its degradation. The sequence is that of NPC1-like intracellular cholesterol transporter 1 from Rattus norvegicus (Rat).